The chain runs to 309 residues: RHOMBOID-like protein 5 (309 aa).

The next 7 membrane-spanning stretches (helical) occupy residues 27–47 (IPVPWVAWLVPLILAANFVTF), 113–133 (IWLHGGFLHLMANMISLMCIG), 140–160 (FGFMRIGALYVISGLGGSLVS), 170–190 (VSVGASGALFGLLGAMLSELI), 200–220 (CTALMTLILIIVLNLSVGFLP), 222–242 (VDNSAHFGGFLAGFFLGFVLL), and 274–294 (IFRFTSLAILLAGFIAGYTKL). Serine 175 serves as the catalytic Nucleophile. The active-site Charge relay system is histidine 227.

Belongs to the peptidase S54 family.

It localises to the membrane. The catalysed reaction is Cleaves type-1 transmembrane domains using a catalytic dyad composed of serine and histidine that are contributed by different transmembrane domains.. In terms of biological role, probable rhomboid-type serine protease that catalyzes intramembrane proteolysis. May function in reproductive organs maturation. The polypeptide is RHOMBOID-like protein 5 (Arabidopsis thaliana (Mouse-ear cress)).